A 370-amino-acid chain; its full sequence is Serine/threonine-protein kinase RIM11/MSD1 (370 aa).

The 284-residue stretch at F39 to F322 folds into the Protein kinase domain. ATP-binding positions include V45–V53 and K68. D164 functions as the Proton acceptor in the catalytic mechanism. The residue at position 199 (Y199) is a Phosphotyrosine.

The protein belongs to the protein kinase superfamily. CMGC Ser/Thr protein kinase family. GSK-3 subfamily. As to quaternary structure, interacts with TDA1.

It carries out the reaction L-seryl-[protein] + ATP = O-phospho-L-seryl-[protein] + ADP + H(+). It catalyses the reaction L-threonyl-[protein] + ATP = O-phospho-L-threonyl-[protein] + ADP + H(+). Serine/threonine protein kinase that is thought to function in regulating kinetochore activity and entry into meiosis. Could phosphorylate IME1. In Saccharomyces cerevisiae (strain ATCC 204508 / S288c) (Baker's yeast), this protein is Serine/threonine-protein kinase RIM11/MSD1 (RIM11).